The chain runs to 247 residues: Uridylate kinase (247 aa).

An ATP-binding site is contributed by 15 to 18 (KLSG). Residues 23–28 (GDEGFG) form an involved in allosteric activation by GTP region. Gly-57 contributes to the UMP binding site. 2 residues coordinate ATP: Gly-58 and Arg-62. UMP is bound by residues Asp-77 and 138 to 145 (TGNPFFTT). ATP is bound by residues Thr-165, Tyr-171, and Asp-174.

It belongs to the UMP kinase family. In terms of assembly, homohexamer.

Its subcellular location is the cytoplasm. The catalysed reaction is UMP + ATP = UDP + ADP. It functions in the pathway pyrimidine metabolism; CTP biosynthesis via de novo pathway; UDP from UMP (UMPK route): step 1/1. Allosterically activated by GTP. Inhibited by UTP. In terms of biological role, catalyzes the reversible phosphorylation of UMP to UDP. The chain is Uridylate kinase from Colwellia psychrerythraea (strain 34H / ATCC BAA-681) (Vibrio psychroerythus).